We begin with the raw amino-acid sequence, 300 residues long: MPKANTAPPSGVERILRPEPLILRGSTLFEGDALTVLRRLPSGSVRCVVTSPPYWGLRDYGIEEQIGLEVTMPQFLHRLVAIFAEVKRVLTDDGTLWLNIGDGYTSGNRGYRAPDKKNPARAMDVRPDTPVGLKPKDLMGIPWRLAFALQDDGWYLRSDIVWNKPNAMPESVKDRPARSHEFLFMFTKSEKYFYDWQAAREPADGGGLRNRRSVWNVNTKPFAGAHFTTFPPELIRPCIHASTEPGDYVLDPFFGSGTVGLVCQDENRQYVGIELNPEYVTLAADRLQGQNSNVIRIAAA.

The segment at 109-129 (RGYRAPDKKNPARAMDVRPDT) is disordered. Positions 112-127 (RAPDKKNPARAMDVRP) are enriched in basic and acidic residues.

The protein belongs to the N(4)/N(6)-methyltransferase family. N(4) subfamily.

It catalyses the reaction a 2'-deoxycytidine in DNA + S-adenosyl-L-methionine = an N(4)-methyl-2'-deoxycytidine in DNA + S-adenosyl-L-homocysteine + H(+). In terms of biological role, a beta subtype methylase, recognizes the double-stranded sequence 5'-CCCGGG-3', methylates C-2 on both strands, and protects the DNA from cleavage by the XcyI endonuclease. This chain is Type II methyltransferase M.XycI (xcyIM), found in Xanthomonas campestris pv. cyanopsidis.